The primary structure comprises 767 residues: Transducin-like enhancer protein 1 (767 aa).

Disordered stretches follow at residues 1-26 (MFPQ…PPQS) and 200-346 (ADAE…TSAS). 3 stretches are compositionally biased toward basic and acidic residues: residues 200–209 (ADAEHRERDP), 235–255 (RKTE…RSED), and 277–289 (NGVD…RKDP). Positions 212-274 (SCLTLPNGER…SPHSVHSYSS (63 aa)) are CCN domain. The segment covering 294–306 (PNSMTSSSSVSPS) has biased composition (low complexity). Polar residues predominate over residues 324 to 346 (LKSSTPNSQSDLNTPGPSGTSAS). WD repeat units lie at residues 467-498 (GIPR…HVYT), 525-555 (NRDN…SIWD), 569-599 (SSAP…VVWD), 611-641 (GHTD…RCWD), 693-723 (LHES…NAWR), and 734-764 (KESS…TVYE).

Belongs to the WD repeat Groucho/TLE family. In terms of processing, ubiquitinated by XIAP/BIRC4. In terms of tissue distribution, abundantly expressed in brain, lung, testis and ovary in comparison with liver, heart, kidney and spleen. Ubiquitously expressed in the developing embryo. Present in unfertilized and fertilized eggs.

It is found in the nucleus. Functionally, nuclear effector molecule. The chain is Transducin-like enhancer protein 1 (esg1) from Xenopus laevis (African clawed frog).